The following is a 650-amino-acid chain: Aminopeptidase B (650 aa).

Position 2 is an N-acetylalanine (Ala2). Residue Ser7 is modified to Phosphoserine. Residue 298 to 302 participates in substrate binding; it reads GGMEN. Residue His325 participates in Zn(2+) binding. The active-site Proton acceptor is Glu326. 2 residues coordinate Zn(2+): His329 and Glu348. Lys446 is subject to N6-acetyllysine.

It belongs to the peptidase M1 family. Requires Zn(2+) as cofactor.

It localises to the secreted. The catalysed reaction is Release of N-terminal Arg and Lys from oligopeptides when P1' is not Pro. Also acts on arylamides of Arg and Lys.. Functionally, exopeptidase which selectively removes arginine and/or lysine residues from the N-terminus of several peptide substrates including Arg(0)-Leu-enkephalin, Arg(0)-Met-enkephalin and Arg(-1)-Lys(0)-somatostatin-14. Can hydrolyze leukotriene A4 (LTA-4) into leukotriene B4 (LTB-4). This chain is Aminopeptidase B (RNPEP), found in Homo sapiens (Human).